Consider the following 371-residue polypeptide: tRNA-specific 2-thiouridylase MnmA (371 aa).

Residues G13–S20 and M39 each bind ATP. Positions N99 to D101 are interaction with target base in tRNA. The active-site Nucleophile is the C104. C104 and C200 form a disulfide bridge. An ATP-binding site is contributed by G128. The tract at residues K150–Q152 is interaction with tRNA. The active-site Cysteine persulfide intermediate is the C200. Positions R309–Y310 are interaction with tRNA.

Belongs to the MnmA/TRMU family.

It localises to the cytoplasm. The enzyme catalyses S-sulfanyl-L-cysteinyl-[protein] + uridine(34) in tRNA + AH2 + ATP = 2-thiouridine(34) in tRNA + L-cysteinyl-[protein] + A + AMP + diphosphate + H(+). Functionally, catalyzes the 2-thiolation of uridine at the wobble position (U34) of tRNA, leading to the formation of s(2)U34. In Bacillus velezensis (strain DSM 23117 / BGSC 10A6 / LMG 26770 / FZB42) (Bacillus amyloliquefaciens subsp. plantarum), this protein is tRNA-specific 2-thiouridylase MnmA.